We begin with the raw amino-acid sequence, 277 residues long: Probable endonuclease 4 (277 aa).

Residues His67, His107, Glu141, Asp173, His176, His210, Asp223, His225, and Glu255 each contribute to the Zn(2+) site.

This sequence belongs to the AP endonuclease 2 family. It depends on Zn(2+) as a cofactor.

It catalyses the reaction Endonucleolytic cleavage to 5'-phosphooligonucleotide end-products.. In terms of biological role, endonuclease IV plays a role in DNA repair. It cleaves phosphodiester bonds at apurinic or apyrimidinic (AP) sites, generating a 3'-hydroxyl group and a 5'-terminal sugar phosphate. In Haloarcula marismortui (strain ATCC 43049 / DSM 3752 / JCM 8966 / VKM B-1809) (Halobacterium marismortui), this protein is Probable endonuclease 4.